Here is a 405-residue protein sequence, read N- to C-terminus: Argininosuccinate synthase (405 aa).

Residues 10–18 (AYSGGLDTS) and alanine 37 each bind ATP. 2 residues coordinate L-citrulline: tyrosine 88 and serine 93. Glycine 118 contacts ATP. L-aspartate is bound by residues threonine 120, asparagine 124, and aspartate 125. Asparagine 124 contributes to the L-citrulline binding site. L-citrulline-binding residues include arginine 128, serine 179, serine 188, glutamate 264, and tyrosine 276.

It belongs to the argininosuccinate synthase family. Type 1 subfamily. In terms of assembly, homotetramer.

The protein localises to the cytoplasm. The catalysed reaction is L-citrulline + L-aspartate + ATP = 2-(N(omega)-L-arginino)succinate + AMP + diphosphate + H(+). It participates in amino-acid biosynthesis; L-arginine biosynthesis; L-arginine from L-ornithine and carbamoyl phosphate: step 2/3. In Pseudomonas savastanoi pv. phaseolicola (strain 1448A / Race 6) (Pseudomonas syringae pv. phaseolicola (strain 1448A / Race 6)), this protein is Argininosuccinate synthase.